The following is a 477-amino-acid chain: ATP synthase subunit beta, chloroplastic (477 aa).

Position 156 to 163 (156 to 163) interacts with ATP; the sequence is GGAGVGKT.

Belongs to the ATPase alpha/beta chains family. F-type ATPases have 2 components, CF(1) - the catalytic core - and CF(0) - the membrane proton channel. CF(1) has five subunits: alpha(3), beta(3), gamma(1), delta(1), epsilon(1). CF(0) has four main subunits: a(1), b(1), b'(1) and c(9-12).

It localises to the plastid. The protein resides in the chloroplast thylakoid membrane. It carries out the reaction ATP + H2O + 4 H(+)(in) = ADP + phosphate + 5 H(+)(out). Produces ATP from ADP in the presence of a proton gradient across the membrane. The catalytic sites are hosted primarily by the beta subunits. This is ATP synthase subunit beta, chloroplastic from Bigelowiella natans (Pedinomonas minutissima).